Here is an 82-residue protein sequence, read N- to C-terminus: Small ribosomal subunit protein eS27 (82 aa).

Residues C37, C40, C56, and C59 each coordinate Zn(2+).

It belongs to the eukaryotic ribosomal protein eS27 family. As to quaternary structure, component of the small ribosomal subunit. Mature ribosomes consist of a small (40S) and a large (60S) subunit. The 40S subunit contains about 32 different proteins and 1 molecule of RNA (18S). The 60S subunit contains 45 different proteins and 3 molecules of RNA (25S, 5.8S and 5S). The cofactor is Zn(2+).

The protein localises to the cytoplasm. Component of the ribosome, a large ribonucleoprotein complex responsible for the synthesis of proteins in the cell. The small ribosomal subunit (SSU) binds messenger RNAs (mRNAs) and translates the encoded message by selecting cognate aminoacyl-transfer RNA (tRNA) molecules. The large subunit (LSU) contains the ribosomal catalytic site termed the peptidyl transferase center (PTC), which catalyzes the formation of peptide bonds, thereby polymerizing the amino acids delivered by tRNAs into a polypeptide chain. The nascent polypeptides leave the ribosome through a tunnel in the LSU and interact with protein factors that function in enzymatic processing, targeting, and the membrane insertion of nascent chains at the exit of the ribosomal tunnel. This chain is Small ribosomal subunit protein eS27 (RPS27), found in Candida albicans (strain SC5314 / ATCC MYA-2876) (Yeast).